The sequence spans 512 residues: Maturase K (512 aa).

Belongs to the intron maturase 2 family. MatK subfamily.

It localises to the plastid. The protein resides in the chloroplast. Usually encoded in the trnK tRNA gene intron. Probably assists in splicing its own and other chloroplast group II introns. The polypeptide is Maturase K (Oenothera argillicola (Appalachian evening primrose)).